Here is a 300-residue protein sequence, read N- to C-terminus: Ribosomal protein L11 methyltransferase (300 aa).

S-adenosyl-L-methionine contacts are provided by threonine 147, glycine 168, aspartate 190, and asparagine 236.

Belongs to the methyltransferase superfamily. PrmA family.

It localises to the cytoplasm. The catalysed reaction is L-lysyl-[protein] + 3 S-adenosyl-L-methionine = N(6),N(6),N(6)-trimethyl-L-lysyl-[protein] + 3 S-adenosyl-L-homocysteine + 3 H(+). Functionally, methylates ribosomal protein L11. This Leptospira borgpetersenii serovar Hardjo-bovis (strain JB197) protein is Ribosomal protein L11 methyltransferase.